A 93-amino-acid polypeptide reads, in one-letter code: Putative pterin-4-alpha-carbinolamine dehydratase (93 aa).

The protein belongs to the pterin-4-alpha-carbinolamine dehydratase family.

The enzyme catalyses (4aS,6R)-4a-hydroxy-L-erythro-5,6,7,8-tetrahydrobiopterin = (6R)-L-erythro-6,7-dihydrobiopterin + H2O. The chain is Putative pterin-4-alpha-carbinolamine dehydratase from Mycolicibacterium vanbaalenii (strain DSM 7251 / JCM 13017 / BCRC 16820 / KCTC 9966 / NRRL B-24157 / PYR-1) (Mycobacterium vanbaalenii).